The sequence spans 930 residues: Polypeptide N-acetylgalactosaminyltransferase 5 (930 aa).

Residues 1–12 are Cytoplasmic-facing; that stretch reads MNKIRKFFRGSG. The chain crosses the membrane as a helical; Signal-anchor for type II membrane protein span at residues 13–35; it reads RVLAFIFVASVIWLLFDMAALRL. Residues 36-930 lie on the Lumenal side of the membrane; it reads SFSEINTGIL…KWKFEKYYDV (895 aa). A disordered region spans residues 163 to 210; that stretch reads GSEKDSFTVSRGVPLNKTAEHTETLDKKQEAPENYNLSSDTSKQASQR. Asn178 carries an N-linked (GlcNAc...) asparagine glycan. Residues 180-193 are compositionally biased toward basic and acidic residues; it reads TAEHTETLDKKQEA. Residues 197–210 show a composition bias toward polar residues; that stretch reads YNLSSDTSKQASQR. 2 N-linked (GlcNAc...) asparagine glycosylation sites follow: Asn198 and Asn213. Ser285 carries the phosphoserine modification. N-linked (GlcNAc...) asparagine glycosylation is found at Asn287 and Asn309. The interval 344–377 is disordered; that stretch reads LGESQGKHIPRSQSQTLSSPLAPKRAVSQSKPTL. N-linked (GlcNAc...) asparagine glycans are attached at residues Asn387 and Asn403. 3 cysteine pairs are disulfide-bonded: Cys476–Cys708, Cys699–Cys779, and Cys812–Cys825. A catalytic subdomain A region spans residues 485 to 594; it reads LPTTSIIMCF…VGWLEPLLER (110 aa). Residues Asp526 and Arg555 each coordinate substrate. Asn568 carries N-linked (GlcNAc...) asparagine glycosylation. Asp578 lines the Mn(2+) pocket. Ser579 contacts substrate. His580 is a binding site for Mn(2+). The catalytic subdomain B stretch occupies residues 654-716; the sequence is IIRCPVMAGG…PCSRVGHIFR (63 aa). Trp685 contributes to the substrate binding site. His713 contributes to the Mn(2+) binding site. Residues Arg716 and Tyr721 each coordinate substrate. N-linked (GlcNAc...) asparagine glycans are attached at residues Asn766, Asn817, and Asn835. The Ricin B-type lectin domain maps to 794 to 925; the sequence is KAPVVRASGV…TEPQQKWKFE (132 aa). 2 cysteine pairs are disulfide-bonded: Cys848–Cys863 and Cys898–Cys913. A glycan (N-linked (GlcNAc...) asparagine) is linked at Asn902.

This sequence belongs to the glycosyltransferase 2 family. GalNAc-T subfamily. As to quaternary structure, interacts with EXT2. Does not interact with EXT1, EXTL1 or EXTL3. The cofactor is Mn(2+). Predominantly expressed in sublingual gland. Expressed at lower level in stomach and small intestine. Weakly or not expressed in submandibular gland, parotid gland, kidney, liver, heart, brain, spleen, lung, skeletal muscle, testis, ovary, cervix and uterus.

It localises to the golgi apparatus membrane. The catalysed reaction is L-seryl-[protein] + UDP-N-acetyl-alpha-D-galactosamine = a 3-O-[N-acetyl-alpha-D-galactosaminyl]-L-seryl-[protein] + UDP + H(+). It carries out the reaction L-threonyl-[protein] + UDP-N-acetyl-alpha-D-galactosamine = a 3-O-[N-acetyl-alpha-D-galactosaminyl]-L-threonyl-[protein] + UDP + H(+). The protein operates within protein modification; protein glycosylation. Functionally, catalyzes the initial reaction in O-linked oligosaccharide biosynthesis, the transfer of an N-acetyl-D-galactosamine residue to a serine or threonine residue on the protein receptor. Has activity toward EA2 peptide substrate, but has a weak activity toward Muc2, Muc1b, rMuc-2 or mG-Muc substrates. This is Polypeptide N-acetylgalactosaminyltransferase 5 (Galnt5) from Rattus norvegicus (Rat).